The following is a 273-amino-acid chain: UPF0380 protein YafZ (273 aa).

It belongs to the UPF0380 family.

The chain is UPF0380 protein YafZ (yafZ) from Escherichia coli (strain K12).